The following is a 123-amino-acid chain: MAWAPLLLTLLSLLTGSLSQPVLTQPPSASASLGASVTLTCTLSSGYSNYKVDWYQQRPGKGPRFVMRVGTGGIVGSKGDGIPDRFSVLGSGLNRYLTIKNIQEEDESDYHCGADHGSGSNFV.

The first 19 residues, 1–19, serve as a signal peptide directing secretion; that stretch reads MAWAPLLLTLLSLLTGSLS. A framework-1 region spans residues 20–44; it reads QPVLTQPPSASASLGASVTLTCTLS. The Ig-like domain occupies 21–123; the sequence is PVLTQPPSAS…ADHGSGSNFV (103 aa). Cys41 and Cys112 are disulfide-bonded. The segment at 45 to 51 is complementarity-determining-1; it reads SGYSNYK. The segment at 52–68 is framework-2; that stretch reads VDWYQQRPGKGPRFVMR. Residues 69-76 form a complementarity-determining-2 region; sequence VGTGGIVG. The tract at residues 77–112 is framework-3; that stretch reads SKGDGIPDRFSVLGSGLNRYLTIKNIQEEDESDYHC. Position 96 is a phosphotyrosine (Tyr96). Thr98 is modified (phosphothreonine). Residues 113–123 form a complementarity-determining-3 region; that stretch reads GADHGSGSNFV.

In terms of assembly, immunoglobulins are composed of two identical heavy chains and two identical light chains; disulfide-linked.

It localises to the secreted. Its subcellular location is the cell membrane. V region of the variable domain of immunoglobulin light chains that participates in the antigen recognition. Immunoglobulins, also known as antibodies, are membrane-bound or secreted glycoproteins produced by B lymphocytes. In the recognition phase of humoral immunity, the membrane-bound immunoglobulins serve as receptors which, upon binding of a specific antigen, trigger the clonal expansion and differentiation of B lymphocytes into immunoglobulins-secreting plasma cells. Secreted immunoglobulins mediate the effector phase of humoral immunity, which results in the elimination of bound antigens. The antigen binding site is formed by the variable domain of one heavy chain, together with that of its associated light chain. Thus, each immunoglobulin has two antigen binding sites with remarkable affinity for a particular antigen. The variable domains are assembled by a process called V-(D)-J rearrangement and can then be subjected to somatic hypermutations which, after exposure to antigen and selection, allow affinity maturation for a particular antigen. The polypeptide is Immunoglobulin lambda variable 9-49 (Homo sapiens (Human)).